The chain runs to 768 residues: Cullin-3-A (768 aa).

The tract at residues 677–698 is disordered; that stretch reads VAAKQGESDPERKETRQKVDDD. Positions 682–698 are enriched in basic and acidic residues; it reads GESDPERKETRQKVDDD. Residues 698-760 enclose the Cullin neddylation domain; it reads DRKHEIEAAI…REYLARTPED (63 aa). Lys712 participates in a covalent cross-link: Glycyl lysine isopeptide (Lys-Gly) (interchain with G-Cter in NEDD8).

The protein belongs to the cullin family. As to quaternary structure, component of multiple BCR (BTB-CUL3-RBX1) E3 ubiquitin-protein ligase complexes formed of cul3, rbx1 and a variable BTB domain-containing protein acting as both, adapter to cullin and substrate recognition subunit. Interacts with btbd6. Neddylated. Attachment of NEDD8 is required for the E3 ubiquitin-protein ligase activity of the SCF-like complex.

Its subcellular location is the nucleus. It participates in protein modification; protein ubiquitination. Its function is as follows. Probable core component of cullin-based SCF-like E3 ubiquitin-protein ligase complexes which mediate the ubiquitination and subsequent proteasomal degradation of target proteins. The E3 ubiquitin-protein ligase activity of the complex is dependent on the neddylation of the cullin subunit. Involved in ER-Golgi transport by regulating the size of COPII coats, thereby playing a key role in collagen export, which is required for embryonic stem (ES) cells division. May play a role in the regulation of mittotic entry via ubiquitination of aurka. The polypeptide is Cullin-3-A (cul3a) (Xenopus laevis (African clawed frog)).